The following is a 216-amino-acid chain: Homeobox-leucine zipper protein ATHB-40 (216 aa).

The segment at 28 to 52 is disordered; that stretch reads GEVKQPKRRRKKTKGSVASADGGNG. A DNA-binding region (homeobox) is located at residues 52–111; the sequence is GLFRKRKLTDEQVNMLEMSFGDEHKLESERKDRLAAELGLDPRQVAVWFQNRRARWKNKR. Residues 112–140 are leucine-zipper; that stretch reads LEEEYNKLKNSHDNVVVDKCRLESEVIQL.

This sequence belongs to the HD-ZIP homeobox family. Class I subfamily. Expressed in roots, flowers and siliques.

It localises to the nucleus. Probable transcription factor. The polypeptide is Homeobox-leucine zipper protein ATHB-40 (ATHB-40) (Arabidopsis thaliana (Mouse-ear cress)).